The following is a 737-amino-acid chain: ATP-dependent RNA helicase SUV3, mitochondrial (737 aa).

The transit peptide at 1-25 (MTLVKYSTIAFPLRSFRLFIFVKKA) directs the protein to the mitochondrion. Positions 226–365 (EARKIRRHII…KSVLPLVKSI (140 aa)) constitute a Helicase ATP-binding domain. 239 to 246 (GPTNSGKT) contributes to the ATP binding site. The 157-residue stretch at 390-546 (PVKDGIKGLR…YLKTAVTWPT (157 aa)) folds into the Helicase C-terminal domain.

This sequence belongs to the helicase family.

The protein resides in the mitochondrion. It carries out the reaction ATP + H2O = ADP + phosphate + H(+). In terms of biological role, probable ATP-dependent RNA helicase involved in a variety of mitochondrial post-transcriptional processes and in translation. It is a key control element in nuclear-mitochondrial interactions. In Saccharomyces paradoxus (Yeast), this protein is ATP-dependent RNA helicase SUV3, mitochondrial (SUV3).